Consider the following 59-residue polypeptide: Conorfamide-Ep1 (59 aa).

A signal peptide spans 1–19 (MSGCGFLLLALLLLVTVEA). Positions 20 to 25 (TKMEKK) are excised as a propeptide. Isoleucine 43 is modified (isoleucine amide). Positions 45 to 59 (RRDMQSPLLSERLRF) are excised as a propeptide.

The protein belongs to the FARP (FMRFamide related peptide) family. In terms of tissue distribution, expressed by the venom duct.

The protein resides in the secreted. Functionally, neurotoxin that is active on vertebrates. When tested at high doses (10 uM), the toxin affects all zebrafish and mouse DRG neurons in culture, which could be an indication of an effect on a widely expressed receptor or ion channel found in both species. At low doses (1 uM), the effects of the toxin are confined to a specific subpopulation of zebrafish and mouse DRG neurons. In vivo, it induces long-lasting dramatic alterations in the locomotor behavior of zebrafish larvae. It rapidly induces hypoactivity and death of larvae at high doses and it causes hyperactivity at lower doses. In zebrafish adults, intramuscular injection causes the decrease of the movements and visited spaces. In mice, intracranial injection causes lethargy and prolonges sleeping phases and reduced movement. The protein is Conorfamide-Ep1 of Conus episcopatus (Bishop's cone).